The following is a 68-amino-acid chain: Arabinogalactan peptide 1 (68 aa).

The signal sequence occupies residues 1–30 (MAGQLKSKIVAVAVAAVVVVASSLVGTASA). S40 carries GPI-anchor amidated serine lipidation. Positions 41–68 (GATATAAAAPAFAAVSVAAAALGGYLFC) are cleaved as a propeptide — removed in mature form.

This sequence belongs to the AG-peptide AGP family. In terms of processing, O-glycosylated on hydroxyprolines; noncontiguous hydroxylproline residues are glycosylated with arabinogalactan. As to expression, expressed in roots, stems, flowers and seeds.

It is found in the vacuole. Its subcellular location is the aleurone grain membrane. In terms of biological role, proteoglycan that seems to be implicated in diverse developmental roles such as differentiation, cell-cell recognition, embryogenesis and programmed cell death. This chain is Arabinogalactan peptide 1 (AGPEP1), found in Oryza sativa subsp. japonica (Rice).